A 329-amino-acid chain; its full sequence is Beta-tectorin (329 aa).

The signal sequence occupies residues 1–17; the sequence is MVTKAFVLLAIFAEASA. Residues 19 to 283 enclose the ZP domain; the sequence is SCAPNKADVI…LSCPVTCDKR (265 aa). 4 N-linked (GlcNAc...) asparagine glycosylation sites follow: Asn80, Asn104, Asn116, and Asn145. Cys204 and Cys264 are oxidised to a cystine. The GPI-anchor amidated glycine moiety is linked to residue Gly305. Positions 306–329 are cleaved as a propeptide — removed in mature form; sequence FSSLYSFSDVLHHLIMMLGICAVL.

In terms of assembly, may form homomeric filament after self-association or heteromeric filament after association with alpha-tectorin. Interacts with CEACAM16. The presence of a hydrophobic C-terminus preceded by a potential cleavage site strongly suggests that tectorins are synthesized as glycosylphosphatidylinositol-linked, membrane-bound precursors. Tectorins are targeted to the apical surface of the inner ear epithelia by the lipid and proteolytically released into the extracellular compartment.

The protein resides in the cell membrane. The protein localises to the secreted. Its subcellular location is the extracellular space. It is found in the extracellular matrix. In terms of biological role, one of the major non-collagenous components of the tectorial membrane. The tectorial membrane is an extracellular matrix of the inner ear that covers the neuroepithelium of the cochlea and contacts the stereocilia bundles of specialized sensory hair cells. Sound induces movement of these hair cells relative to the tectorial membrane, deflects the stereocilia and leads to fluctuations in hair-cell membrane potential, transducing sound into electrical signals. This chain is Beta-tectorin (TECTB), found in Homo sapiens (Human).